Reading from the N-terminus, the 236-residue chain is UPF0173 metal-dependent hydrolase Mnod_3315 (236 aa).

Belongs to the UPF0173 family.

The sequence is that of UPF0173 metal-dependent hydrolase Mnod_3315 from Methylobacterium nodulans (strain LMG 21967 / CNCM I-2342 / ORS 2060).